The following is a 353-amino-acid chain: Glycerol-3-phosphate dehydrogenase [NAD(P)+] (353 aa).

W11, R40, and K115 together coordinate NADPH. Sn-glycerol 3-phosphate is bound by residues K115, G156, and S158. A160 is a binding site for NADPH. Sn-glycerol 3-phosphate is bound by residues K211, D264, S274, R275, and N276. The active-site Proton acceptor is the K211. R275 provides a ligand contact to NADPH. Positions 299 and 301 each coordinate NADPH.

It belongs to the NAD-dependent glycerol-3-phosphate dehydrogenase family.

Its subcellular location is the cytoplasm. It catalyses the reaction sn-glycerol 3-phosphate + NAD(+) = dihydroxyacetone phosphate + NADH + H(+). The catalysed reaction is sn-glycerol 3-phosphate + NADP(+) = dihydroxyacetone phosphate + NADPH + H(+). The protein operates within membrane lipid metabolism; glycerophospholipid metabolism. Its function is as follows. Catalyzes the reduction of the glycolytic intermediate dihydroxyacetone phosphate (DHAP) to sn-glycerol 3-phosphate (G3P), the key precursor for phospholipid synthesis. This is Glycerol-3-phosphate dehydrogenase [NAD(P)+] from Polaromonas sp. (strain JS666 / ATCC BAA-500).